A 304-amino-acid chain; its full sequence is Oxygen-dependent coproporphyrinogen-III oxidase (304 aa).

Serine 93 is a substrate binding site. A divalent metal cation contacts are provided by histidine 97 and histidine 107. Histidine 107 serves as the catalytic Proton donor. Position 109–111 (asparagine 109–arginine 111) interacts with substrate. Positions 146 and 176 each coordinate a divalent metal cation. The tract at residues tyrosine 241–alanine 276 is important for dimerization. Glycine 259 to arginine 261 lines the substrate pocket.

Belongs to the aerobic coproporphyrinogen-III oxidase family. Homodimer. It depends on a divalent metal cation as a cofactor.

The protein resides in the cytoplasm. It carries out the reaction coproporphyrinogen III + O2 + 2 H(+) = protoporphyrinogen IX + 2 CO2 + 2 H2O. It functions in the pathway porphyrin-containing compound metabolism; protoporphyrin-IX biosynthesis; protoporphyrinogen-IX from coproporphyrinogen-III (O2 route): step 1/1. Involved in the heme biosynthesis. Catalyzes the aerobic oxidative decarboxylation of propionate groups of rings A and B of coproporphyrinogen-III to yield the vinyl groups in protoporphyrinogen-IX. In Pseudomonas fluorescens (strain Pf0-1), this protein is Oxygen-dependent coproporphyrinogen-III oxidase.